A 385-amino-acid polypeptide reads, in one-letter code: AA13 family lytic polysaccharide monooxygenase NCU08746 (385 aa).

An N-terminal signal peptide occupies residues 1-18 (MKFSIISVALASAITVDA). Histidine 19 is a binding site for Cu(2+). Histidine 19 carries the post-translational modification Methylhistidine. Residues 19–248 (HGYLTIPFSR…AQVYLSCADI (230 aa)) form the Chitin-binding type-4 domain. A disulfide bond links cysteine 40 and cysteine 43. The N-linked (GlcNAc...) asparagine glycan is linked to asparagine 54. Disulfide bonds link cysteine 66-cysteine 245, cysteine 102-cysteine 203, cysteine 118-cysteine 145, cysteine 153-cysteine 161, cysteine 167-cysteine 173, and cysteine 181-cysteine 192. A Cu(2+)-binding site is contributed by histidine 109. Tyrosine 242 contacts Cu(2+). A CBM20 domain is found at 278–385 (CTPAATVAVT…ESVAVESSWK (108 aa)). Asparagine 365 carries N-linked (GlcNAc...) asparagine glycosylation.

It belongs to the polysaccharide monooxygenase AA13 family. Cu(2+) is required as a cofactor.

It localises to the secreted. It catalyses the reaction starch + reduced acceptor + O2 = D-glucono-1,5-lactone-terminated malto-oligosaccharides + short-chain malto-oligosaccharides + acceptor + H2O.. Its function is as follows. Starch-active lytic polysaccharide monooxygenase that oxidizes the C1 position of starch substrates, but not in cellulose or chitin. Catalysis by LPMOs requires the reduction of the active-site copper from Cu(II) to Cu(I) by a reducing agent and H(2)O(2) or O(2) as a cosubstrate. The protein is AA13 family lytic polysaccharide monooxygenase NCU08746 of Neurospora crassa (strain ATCC 24698 / 74-OR23-1A / CBS 708.71 / DSM 1257 / FGSC 987).